A 138-amino-acid polypeptide reads, in one-letter code: Calmodulin-beta (138 aa).

EF-hand domains follow at residues 1-32 (EFKE…LGQN), 33-68 (PTEA…KMKE), 70-105 (DSEE…LGEK), and 106-138 (LTDE…MTSK). Positions 10, 12, 14, 16, 21, 46, 48, 50, 52, 57, 83, 85, 87, 94, 119, 121, 123, 125, and 130 each coordinate Ca(2+).

It belongs to the calmodulin family.

Functionally, calmodulin mediates the control of a large number of enzymes, ion channels and other proteins by Ca(2+). Among the enzymes to be stimulated by the calmodulin-Ca(2+) complex are a number of protein kinases and phosphatases. The protein is Calmodulin-beta of Arbacia punctulata (Punctuate sea urchin).